The following is a 32-amino-acid chain: uncharacterized protein (32 aa).

This is an uncharacterized protein from Schizosaccharomyces pombe (strain 972 / ATCC 24843) (Fission yeast).